Reading from the N-terminus, the 170-residue chain is Adenine phosphoribosyltransferase (170 aa).

It belongs to the purine/pyrimidine phosphoribosyltransferase family. As to quaternary structure, homodimer.

Its subcellular location is the cytoplasm. The enzyme catalyses AMP + diphosphate = 5-phospho-alpha-D-ribose 1-diphosphate + adenine. It participates in purine metabolism; AMP biosynthesis via salvage pathway; AMP from adenine: step 1/1. Its function is as follows. Catalyzes a salvage reaction resulting in the formation of AMP, that is energically less costly than de novo synthesis. The sequence is that of Adenine phosphoribosyltransferase from Bacillus pumilus (strain SAFR-032).